The chain runs to 494 residues: Probable cytosol aminopeptidase (494 aa).

Mn(2+) is bound by residues Lys264 and Asp269. Lys276 is an active-site residue. Mn(2+)-binding residues include Asp287, Asp346, and Glu348. Arg350 is an active-site residue.

The protein belongs to the peptidase M17 family. The cofactor is Mn(2+).

The protein localises to the cytoplasm. The enzyme catalyses Release of an N-terminal amino acid, Xaa-|-Yaa-, in which Xaa is preferably Leu, but may be other amino acids including Pro although not Arg or Lys, and Yaa may be Pro. Amino acid amides and methyl esters are also readily hydrolyzed, but rates on arylamides are exceedingly low.. The catalysed reaction is Release of an N-terminal amino acid, preferentially leucine, but not glutamic or aspartic acids.. Functionally, presumably involved in the processing and regular turnover of intracellular proteins. Catalyzes the removal of unsubstituted N-terminal amino acids from various peptides. In Pasteurella multocida (strain Pm70), this protein is Probable cytosol aminopeptidase (pepA).